Consider the following 956-residue polypeptide: Bifunctional glutamine synthetase adenylyltransferase/adenylyl-removing enzyme (956 aa).

Residues 1 to 441 form an adenylyl removase region; the sequence is MLPLSTPLLA…IFTQLIGDDS (441 aa). The interval 450–956 is adenylyl transferase; sequence HVPFKSLWLE…RRSWQQWLGE (507 aa).

Belongs to the GlnE family. The cofactor is Mg(2+).

The catalysed reaction is [glutamine synthetase]-O(4)-(5'-adenylyl)-L-tyrosine + phosphate = [glutamine synthetase]-L-tyrosine + ADP. It carries out the reaction [glutamine synthetase]-L-tyrosine + ATP = [glutamine synthetase]-O(4)-(5'-adenylyl)-L-tyrosine + diphosphate. Involved in the regulation of glutamine synthetase GlnA, a key enzyme in the process to assimilate ammonia. When cellular nitrogen levels are high, the C-terminal adenylyl transferase (AT) inactivates GlnA by covalent transfer of an adenylyl group from ATP to specific tyrosine residue of GlnA, thus reducing its activity. Conversely, when nitrogen levels are low, the N-terminal adenylyl removase (AR) activates GlnA by removing the adenylyl group by phosphorolysis, increasing its activity. The regulatory region of GlnE binds the signal transduction protein PII (GlnB) which indicates the nitrogen status of the cell. In Photorhabdus laumondii subsp. laumondii (strain DSM 15139 / CIP 105565 / TT01) (Photorhabdus luminescens subsp. laumondii), this protein is Bifunctional glutamine synthetase adenylyltransferase/adenylyl-removing enzyme.